The sequence spans 209 residues: Orotate phosphoribosyltransferase (209 aa).

5-phospho-alpha-D-ribose 1-diphosphate-binding positions include R96, K100, H102, and 122–130 (EDLISTGGS). S126 serves as a coordination point for orotate.

The protein belongs to the purine/pyrimidine phosphoribosyltransferase family. PyrE subfamily. As to quaternary structure, homodimer. Mg(2+) is required as a cofactor.

It carries out the reaction orotidine 5'-phosphate + diphosphate = orotate + 5-phospho-alpha-D-ribose 1-diphosphate. Its pathway is pyrimidine metabolism; UMP biosynthesis via de novo pathway; UMP from orotate: step 1/2. Catalyzes the transfer of a ribosyl phosphate group from 5-phosphoribose 1-diphosphate to orotate, leading to the formation of orotidine monophosphate (OMP). This chain is Orotate phosphoribosyltransferase, found in Streptococcus mutans serotype c (strain ATCC 700610 / UA159).